A 185-amino-acid polypeptide reads, in one-letter code: V-type proton ATPase subunit E (185 aa).

It belongs to the V-ATPase E subunit family.

Its function is as follows. Produces ATP from ADP in the presence of a proton gradient across the membrane. The protein is V-type proton ATPase subunit E of Deinococcus deserti (strain DSM 17065 / CIP 109153 / LMG 22923 / VCD115).